The primary structure comprises 94 residues: Putative testis-specific prion protein (94 aa).

A signal peptide spans 1–18; it reads MQHSLVFFFAVILHLSHL. A glycan (N-linked (GlcNAc...) asparagine) is linked at N44.

Specifically expressed in adult testis.

Its subcellular location is the secreted. This chain is Putative testis-specific prion protein (PRNT), found in Homo sapiens (Human).